A 208-amino-acid chain; its full sequence is Small ribosomal subunit protein uS4 (208 aa).

A disordered region spans residues 28–48; sequence YFEKRPYPPGEHGRARRRTES. In terms of domain architecture, S4 RNA-binding spans 95–159; the sequence is MRLDALVLRS…ARTPFQVAAA (65 aa).

It belongs to the universal ribosomal protein uS4 family. Part of the 30S ribosomal subunit. Contacts protein S5. The interaction surface between S4 and S5 is involved in control of translational fidelity.

Its function is as follows. One of the primary rRNA binding proteins, it binds directly to 16S rRNA where it nucleates assembly of the body of the 30S subunit. Functionally, with S5 and S12 plays an important role in translational accuracy. This is Small ribosomal subunit protein uS4 from Beutenbergia cavernae (strain ATCC BAA-8 / DSM 12333 / CCUG 43141 / JCM 11478 / NBRC 16432 / NCIMB 13614 / HKI 0122).